Consider the following 202-residue polypeptide: Securin (202 aa).

N-acetylalanine is present on A2. The segment at 35 to 94 (LDGRSQVSTPRFGKTFDAPPALPKATRKALGTVNRATEKSVKTKGPLKQKQPSFSAKKMT) is disordered. Residues 61 to 64 (RKAL) carry the D-box motif. Short sequence motifs (TEK-box) lie at residues 71-73 (TEK) and 94-96 (TEK). An SH3-binding motif is present at residues 163-173 (PPSPVRMPSPP). S165 is subject to Phosphoserine; by CDK1.

This sequence belongs to the securin family. In terms of assembly, interacts with RPS10 and DNAJA1. Interacts with the caspase-like ESPL1, and prevents its protease activity probably by covering its active site. Interacts with TP53 and blocks its activity probably by blocking its binding to DNA. Interacts with the Ku 70 kDa subunit of ds-DNA kinase. Interacts with PTTG1IP. Post-translationally, phosphorylated at Ser-165 by CDK1 during mitosis. Phosphorylated in vitro by ds-DNA kinase. In terms of processing, ubiquitinated through 'Lys-11' linkage of ubiquitin moieties by the anaphase promoting complex (APC) at the onset of anaphase, conducting to its degradation. 'Lys-11'-linked ubiquitination is mediated by the E2 ligase UBE2C/UBCH10.

The protein resides in the cytoplasm. The protein localises to the nucleus. Functionally, regulatory protein, which plays a central role in chromosome stability, in the p53/TP53 pathway, and DNA repair. Probably acts by blocking the action of key proteins. During the mitosis, it blocks Separase/ESPL1 function, preventing the proteolysis of the cohesin complex and the subsequent segregation of the chromosomes. At the onset of anaphase, it is ubiquitinated, conducting to its destruction and to the liberation of ESPL1. Its function is however not limited to a blocking activity, since it is required to activate ESPL1. Negatively regulates the transcriptional activity and related apoptosis activity of TP53. The negative regulation of TP53 may explain the strong transforming capability of the protein when it is overexpressed. May also play a role in DNA repair via its interaction with Ku, possibly by connecting DNA damage-response pathways with sister chromatid separation. This chain is Securin (PTTG1), found in Gorilla gorilla gorilla (Western lowland gorilla).